The following is a 230-amino-acid chain: Large ribosomal subunit protein uL1 (230 aa).

This sequence belongs to the universal ribosomal protein uL1 family. As to quaternary structure, part of the 50S ribosomal subunit.

In terms of biological role, binds directly to 23S rRNA. The L1 stalk is quite mobile in the ribosome, and is involved in E site tRNA release. Its function is as follows. Protein L1 is also a translational repressor protein, it controls the translation of the L11 operon by binding to its mRNA. In Bifidobacterium longum (strain DJO10A), this protein is Large ribosomal subunit protein uL1.